Reading from the N-terminus, the 349-residue chain is Mitogen-activated protein kinase sty1 (349 aa).

The Protein kinase domain occupies 20–299; it reads YSDLQPIGMG…AADALAHNYL (280 aa). ATP-binding positions include 26–34 and lysine 49; that span reads IGMGAFGLV. Catalysis depends on aspartate 141, which acts as the Proton acceptor. Phosphothreonine is present on threonine 171. The TXY signature appears at 171–173; it reads TGY. Tyrosine 173 carries the post-translational modification Phosphotyrosine. Residue serine 175 is modified to Phosphoserine. Threonine 176 carries the phosphothreonine modification. The TXY signature appears at 176–178; that stretch reads TRY.

The protein belongs to the protein kinase superfamily. Ser/Thr protein kinase family. MAP kinase subfamily. HOG1 sub-subfamily. As to quaternary structure, interacts with cdc37, cmk2, hal4, sin1 and srk1. Requires Mg(2+) as cofactor. In terms of processing, dually phosphorylated on Thr-171 and Tyr-173, which activates the enzyme. Phosphorylated by wis1 in response to osmotic stress, nutrient limitation, hydrogen peroxide and arsenite. Dephosphorylated by pyp1 and pyp2.

Its subcellular location is the cytoplasm. It localises to the nucleus. The enzyme catalyses L-seryl-[protein] + ATP = O-phospho-L-seryl-[protein] + ADP + H(+). It carries out the reaction L-threonyl-[protein] + ATP = O-phospho-L-threonyl-[protein] + ADP + H(+). With respect to regulation, activated by the MAPK kinase wisl, and negatively regulated by pypl and pyp2 tyrosine phosphatases. Proline-directed serine/threonine-protein kinase involved in a signal transduction pathway that is activated by changes in the osmolarity of the extracellular environment. Controls osmotic regulation of transcription of target genes. Involved in osmoregulation and stress response pathways leading to an efficient start of sexual differentiation. Supports translation initiation and facilitates adaptation to environmental stress in part through reducing eIF2-alpha phosphorylation. Links the cell-cycle G2/M control with changes in the extracellular environment that affect cell physiology. Phosphorylates atf1 and mkp1. In conjunction with hal4, has a role in the cellular resistance to toxic cations such as Na(+), Li(+) and Ca(2+). Involved in resistance to arsenite, methylglyoxal and hydrogen peroxide. Involved in induction of thermotolerance in mRNA export, as well as in vacuolar fission. The chain is Mitogen-activated protein kinase sty1 (sty1) from Schizosaccharomyces pombe (strain 972 / ATCC 24843) (Fission yeast).